Here is an 840-residue protein sequence, read N- to C-terminus: Translation initiation factor IF-2 (840 aa).

A compositionally biased stretch (basic and acidic residues) spans 95 to 143; it reads RSPDEIEAERQRELEEQRAAEEAERLKAEEAAARQRAEEEARKAEEAAR. Disordered stretches follow at residues 95–155 and 172–256; these read RSPD…ATAG and KPAA…PTGP. Residues 144–155 show a composition bias toward low complexity; that stretch reads AKAAQEAAATAG. Composition is skewed to basic and acidic residues over residues 175-191 and 223-232; these read AVEE…PKRD and STDEESDGYR. The span at 233-247 shows a compositional bias: basic residues; that stretch reads RGGRGGKSKLKKRNQ. A tr-type G domain is found at 340 to 509; the sequence is TRAPVVTVMG…LLQAEVLELK (170 aa). The segment at 349–356 is G1; it reads GHVDHGKT. Residue 349–356 coordinates GTP; sequence GHVDHGKT. The tract at residues 374-378 is G2; it reads GITQH. A G3 region spans residues 395-398; sequence DTPG. Residues 395-399 and 449-452 each bind GTP; these read DTPGH and NKID. The segment at 449–452 is G4; it reads NKID. Residues 485–487 form a G5 region; sequence SAK.

The protein belongs to the TRAFAC class translation factor GTPase superfamily. Classic translation factor GTPase family. IF-2 subfamily.

The protein localises to the cytoplasm. In terms of biological role, one of the essential components for the initiation of protein synthesis. Protects formylmethionyl-tRNA from spontaneous hydrolysis and promotes its binding to the 30S ribosomal subunits. Also involved in the hydrolysis of GTP during the formation of the 70S ribosomal complex. This is Translation initiation factor IF-2 from Pseudomonas aeruginosa (strain LESB58).